We begin with the raw amino-acid sequence, 438 residues long: Protein DJ-1 homolog B (438 aa).

A chloroplast-targeting transit peptide spans 1–45 (MASSSLCHRYFNKITVTPFFNTKKLHHYSPRRISLRVNRRSFSIS). PfpI endopeptidase domains lie at 53–220 (KKVL…EQLL) and 258–424 (PQIL…EKFY).

The protein belongs to the peptidase C56 family. In terms of assembly, homodimer.

It is found in the plastid. It localises to the chloroplast. In terms of biological role, may be involved in oxidative stress response. The protein is Protein DJ-1 homolog B (DJ1B) of Arabidopsis thaliana (Mouse-ear cress).